Here is a 179-residue protein sequence, read N- to C-terminus: ATP synthase subunit b (179 aa).

Residues 27–47 (TAITFLVMLVVLGKFAWGPIV) traverse the membrane as a helical segment.

This sequence belongs to the ATPase B chain family. As to quaternary structure, F-type ATPases have 2 components, F(1) - the catalytic core - and F(0) - the membrane proton channel. F(1) has five subunits: alpha(3), beta(3), gamma(1), delta(1), epsilon(1). F(0) has three main subunits: a(1), b(2) and c(10-14). The alpha and beta chains form an alternating ring which encloses part of the gamma chain. F(1) is attached to F(0) by a central stalk formed by the gamma and epsilon chains, while a peripheral stalk is formed by the delta and b chains.

It localises to the cell inner membrane. Functionally, f(1)F(0) ATP synthase produces ATP from ADP in the presence of a proton or sodium gradient. F-type ATPases consist of two structural domains, F(1) containing the extramembraneous catalytic core and F(0) containing the membrane proton channel, linked together by a central stalk and a peripheral stalk. During catalysis, ATP synthesis in the catalytic domain of F(1) is coupled via a rotary mechanism of the central stalk subunits to proton translocation. Component of the F(0) channel, it forms part of the peripheral stalk, linking F(1) to F(0). The sequence is that of ATP synthase subunit b from Anaeromyxobacter sp. (strain K).